We begin with the raw amino-acid sequence, 469 residues long: Alpha,alpha-trehalose-phosphate synthase [UDP-forming] (469 aa).

The D-glucose 6-phosphate site is built by Y87 and D141. Residues R279 and K284 each contribute to the UDP site. R279 and K284 together coordinate UDP-alpha-D-glucose. R317 lines the D-glucose 6-phosphate pocket. A UDP-alpha-D-glucose-binding site is contributed by 378-386 (DGMNLVSYE). 382–386 (LVSYE) provides a ligand contact to UDP.

It belongs to the glycosyltransferase 20 family.

The catalysed reaction is D-glucose 6-phosphate + UDP-alpha-D-glucose = alpha,alpha-trehalose 6-phosphate + UDP + H(+). It functions in the pathway carbohydrate biosynthesis. Its function is as follows. Synthase catalytic subunit of the trehalose synthase complex that catalyzes the production of trehalose from glucose-6-phosphate and UDP-alpha-D-glucose in a two step process. The disaccharide trehalose serves as a storage carbohydrate that is mobilized during spore germination. This chain is Alpha,alpha-trehalose-phosphate synthase [UDP-forming], found in Yarrowia lipolytica (strain CLIB 122 / E 150) (Yeast).